A 408-amino-acid polypeptide reads, in one-letter code: Peptidase T (408 aa).

His78 serves as a coordination point for Zn(2+). The active site involves Asp80. Zn(2+) is bound at residue Asp140. The active-site Proton acceptor is Glu173. Zn(2+)-binding residues include Glu174, Asp196, and His379.

It belongs to the peptidase M20B family. It depends on Zn(2+) as a cofactor.

It localises to the cytoplasm. The catalysed reaction is Release of the N-terminal residue from a tripeptide.. Its function is as follows. Cleaves the N-terminal amino acid of tripeptides. This Escherichia fergusonii (strain ATCC 35469 / DSM 13698 / CCUG 18766 / IAM 14443 / JCM 21226 / LMG 7866 / NBRC 102419 / NCTC 12128 / CDC 0568-73) protein is Peptidase T.